Consider the following 388-residue polypeptide: Glucose-6-phosphate/phosphate translocator 2, chloroplastic (388 aa).

A chloroplast-targeting transit peptide spans 1–68 (MLSSIKPSSS…SASNFKREVK (68 aa)). 8 helical membrane-spanning segments follow: residues 95–115 (LKIG…NIYN), 122–142 (FPYP…MMLV), 158–178 (FWKT…AATV), 211–231 (FPLP…LAAI), 233–253 (ELNF…AFVF), 281–301 (LVIL…AAGW), 305–325 (VSQV…FYHL), and 358–378 (IIIF…IAIF). The EamA domain maps to 113–231 (IYNKKVLNAF…IIGGCALAAI (119 aa)).

The protein belongs to the TPT transporter family. GPT (TC 2.A.7.9) subfamily. In terms of tissue distribution, expressed in seeds, flowers, stamens, and rosette leaves, with highest levels found in sepals and senescing leaves.

The protein localises to the plastid. The protein resides in the chloroplast membrane. Functionally, glucose 6-phosphate (Glc6P) transporter. Also transports inorganic phosphate, 3-phosphoglycerate, triose phosphates and, to a leser extent, phosphoenolpyruvate. Responsible for the transport of Glc6P into plastids of heterotrophic tissues where it can be used as a carbon source for starch biosynthesis, as substrate for fatty acid biosynthesis or as substrate for NADPH generation via the oxidative pentose phosphate pathway (OPPP). Required for dynamic acclimation of photosynthesis and partitioning of Glc6P between the chloroplast and the cytosol. May modulate the sensing of sugar status during early seedling development. The chain is Glucose-6-phosphate/phosphate translocator 2, chloroplastic from Arabidopsis thaliana (Mouse-ear cress).